We begin with the raw amino-acid sequence, 517 residues long: GMP synthase [glutamine-hydrolyzing] (517 aa).

A Glutamine amidotransferase type-1 domain is found at 9–199 (RILILDFGSQ…VLGVCGCERL (191 aa)). Cysteine 86 acts as the Nucleophile in catalysis. Catalysis depends on residues histidine 173 and glutamate 175. One can recognise a GMPS ATP-PPase domain in the interval 200–392 (WTSESIIEDA…LGLPYNMLYR (193 aa)). 227 to 233 (SGGVDSS) lines the ATP pocket.

Homodimer.

It carries out the reaction XMP + L-glutamine + ATP + H2O = GMP + L-glutamate + AMP + diphosphate + 2 H(+). Its pathway is purine metabolism; GMP biosynthesis; GMP from XMP (L-Gln route): step 1/1. Its function is as follows. Catalyzes the synthesis of GMP from XMP. The chain is GMP synthase [glutamine-hydrolyzing] from Vibrio parahaemolyticus serotype O3:K6 (strain RIMD 2210633).